A 498-amino-acid polypeptide reads, in one-letter code: Diacylglycerol O-acyltransferase 1 (498 aa).

The disordered stretch occupies residues 1–66 (MGDRGGAGSS…AHTRDKDGRT (66 aa)). The Cytoplasmic segment spans residues 1-92 (MGDRGGAGSS…SLFSSDSGFS (92 aa)). An involved in homomerization region spans residues 1–100 (MGDRGGAGSS…FSNYRGILNW (100 aa)). At serine 20 the chain carries Phosphoserine. Residues 93 to 127 (NYRGILNWCVVMLILSNARLFLENLIKYGILVDPI) traverse the membrane as a helical segment. Residues 128–139 (QVVSLFLKDPYS) lie on the Lumenal side of the membrane. The interval 128-139 (QVVSLFLKDPYS) is extracellular loop 1 (EL1). The chain crosses the membrane as a helical span at residues 140 to 165 (WPAPCVIIASNIFVVAAFQIEKRLAV). The segment at 140-498 (WPAPCVIIAS…VLNYDAPVGV (359 aa)) is MBOAT fold. Topologically, residues 166 to 170 (GALTE) are cytoplasmic. Residues 171 to 193 (QMGLLLHVVNLATIICFPAAVAL) traverse the membrane as a helical segment. Over 194-200 (LVESITP) the chain is Lumenal. The chain crosses the membrane as a helical span at residues 201–232 (VGSVFALASYSIMFLKLYSYRDVNLWCRQRRV). The Cytoplasmic portion of the chain corresponds to 233-284 (KAKAVSTGKKVSGAAAQQAVSYPDNLTYRDLYYFIFAPTLCYELNFPRSPRI). Residues 235–287 (KAVSTGKKVSGAAAQQAVSYPDNLTYRDLYYFIFAPTLCYELNFPRSPRIRKR) are intracellular loop 1 (IL1). A helical transmembrane segment spans residues 285–319 (RKRFLLRRVLEMLFFTQLQVGLIQQWMVPTIQNSM). Topologically, residues 320–326 (KPFKDMD) are lumenal. Residues 327-364 (YSRIIERLLKLAVPNHLIWLIFFYWFFHSCLNAVAELL) traverse the membrane as a helical segment. Residues 365–410 (QFGDREFYRDWWNAESVTYFWQNWNIPVHKWCIRHFYKPMLRHGSS) are Cytoplasmic-facing. The segment at 365–410 (QFGDREFYRDWWNAESVTYFWQNWNIPVHKWCIRHFYKPMLRHGSS) is intracellular loop 2 (IL2). An FYXDWWN motif motif is present at residues 371 to 377 (FYRDWWN). An acyl-CoA-binding positions include 385–393 (WQNWNIPVH), tyrosine 401, and arginine 415. The interval 391-405 (PVHKWCIRHFYKPML) is amphipathic helix (AH). A helical membrane pass occupies residues 411 to 431 (KWVARTGVFLTSAFFHEYLVS). The active site involves histidine 426. Residues 432–439 (VPLRMFRL) are Lumenal-facing. A helical transmembrane segment spans residues 440 to 458 (WAFTAMMAQVPLAWIVGRF). The Cytoplasmic portion of the chain corresponds to 459-460 (FQ). A helical membrane pass occupies residues 461–492 (GNYGNAAVWVTLIIGQPVAVLMYVHDYYVLNY). Tyrosine 488 serves as a coordination point for an acyl-CoA. Residues 493 to 498 (DAPVGV) lie on the Lumenal side of the membrane.

The protein belongs to the membrane-bound acyltransferase family. Sterol o-acyltransferase subfamily. As to quaternary structure, homodimer or homotetramer; both forms have similar enzymatic activities.

Its subcellular location is the endoplasmic reticulum membrane. The catalysed reaction is an acyl-CoA + a 1,2-diacyl-sn-glycerol = a triacyl-sn-glycerol + CoA. It catalyses the reaction all-trans-retinol + an acyl-CoA = an all-trans-retinyl ester + CoA. It carries out the reaction 1-octadecanoyl-2-(5Z,8Z,11Z,14Z-eicosatetraenoyl)-sn-glycerol + (9Z)-octadecenoyl-CoA = 1-octadecanoyl-2-(5Z,8Z,11Z,14Z)-eicosatetraenoyl-3-(9Z)-octadecenoyl-sn-glycerol + CoA. The enzyme catalyses hexadecane-1,2-diol + 2 hexadecanoyl-CoA = 1,2-O,O-dihexadecanoyl-1,2-hexadecanediol + 2 CoA. The catalysed reaction is hexadecane-1,2-diol + hexadecanoyl-CoA = 2-hydroxyhexadecyl hexadecanoate + CoA. It catalyses the reaction 2-(9Z-octadecenoyl)-glycerol + hexadecanoyl-CoA = 1-hexadecanoyl-2-(9Z-octadecenoyl)-sn-glycerol + CoA. It carries out the reaction 1,2-di-(9Z-octadecenoyl)-sn-glycerol + hexadecanoyl-CoA = 1,2-di-(9Z)-octadecenoyl-3-hexadecanoyl-sn-glycerol + CoA. The enzyme catalyses hexadecan-1-ol + hexadecanoyl-CoA = hexadecanyl hexadecanoate + CoA. The catalysed reaction is all-trans-retinol + hexadecanoyl-CoA = all-trans-retinyl hexadecanoate + CoA. It catalyses the reaction 13-cis-retinol + hexadecanoyl-CoA = 13-cis-retinyl hexadecanoate + CoA. It carries out the reaction 1,2-di-(9Z-octadecenoyl)-sn-glycerol + (9Z)-octadecenoyl-CoA = 1,2,3-tri-(9Z-octadecenoyl)-glycerol + CoA. The enzyme catalyses 1,3-di-(9Z-octadecenoyl)-glycerol + (9Z)-octadecenoyl-CoA = 1,2,3-tri-(9Z-octadecenoyl)-glycerol + CoA. The catalysed reaction is 2,3-di-(9Z)-octadecenoyl-sn-glycerol + (9Z)-octadecenoyl-CoA = 1,2,3-tri-(9Z-octadecenoyl)-glycerol + CoA. It catalyses the reaction 1-O-(9Z-octadecenyl)-glycerol + (9Z)-octadecenoyl-CoA = 1-O-(9Z-octadecyl)-3-(9Z-octadecenoyl)-glycerol + CoA. It carries out the reaction 1-(9Z-octadecenoyl)-glycerol + (9Z)-octadecenoyl-CoA = 1,2-di-(9Z-octadecenoyl)-glycerol + CoA. The enzyme catalyses 2-(9Z-octadecenoyl)-glycerol + (9Z)-octadecenoyl-CoA = 1,2-di-(9Z-octadecenoyl)-sn-glycerol + CoA. The catalysed reaction is 1-O-(9Z-octadecyl)-3-(9Z-octadecenoyl)-glycerol + (9Z)-octadecenoyl-CoA = 1-O-(9Z-octadecenyl)-2,3-di-(9Z-octadecenoyl)glycerol + CoA. It catalyses the reaction 1,2-di-(9Z-octadecenoyl)-glycerol + (9Z)-octadecenoate + H(+) = 1,2,3-tri-(9Z-octadecenoyl)-glycerol + H2O. The protein operates within lipid metabolism; glycerolipid metabolism. In terms of biological role, catalyzes the terminal and only committed step in triacylglycerol synthesis by using diacylglycerol and fatty acyl CoA as substrates. Highly expressed in epithelial cells of the small intestine and its activity is essential for the absorption of dietary fats. In liver, plays a role in esterifying exogenous fatty acids to glycerol, and is required to synthesize fat for storage. Also present in female mammary glands, where it produces fat in the milk. May be involved in VLDL (very low density lipoprotein) assembly. In contrast to DGAT2 it is not essential for survival. Functions as the major acyl-CoA retinol acyltransferase (ARAT) in the skin, where it acts to maintain retinoid homeostasis and prevent retinoid toxicity leading to skin and hair disorders. Exhibits additional acyltransferase activities, includin acyl CoA:monoacylglycerol acyltransferase (MGAT), wax monoester and wax diester synthases. Also able to use 1-monoalkylglycerol (1-MAkG) as an acyl acceptor for the synthesis of monoalkyl-monoacylglycerol (MAMAG). The polypeptide is Diacylglycerol O-acyltransferase 1 (Mus musculus (Mouse)).